A 98-amino-acid polypeptide reads, in one-letter code: Large ribosomal subunit protein mL53 (98 aa).

This sequence belongs to the mitochondrion-specific ribosomal protein mL53 family. In terms of assembly, component of the mitochondrial large ribosomal subunit (mt-LSU). Mature yeast 74S mitochondrial ribosomes consist of a small (37S) and a large (54S) subunit. The 37S small subunit contains a 15S ribosomal RNA (15S mt-rRNA) and 34 different proteins. The 54S large subunit contains a 21S rRNA (21S mt-rRNA) and 46 different proteins.

The protein resides in the mitochondrion. In terms of biological role, component of the mitochondrial ribosome (mitoribosome), a dedicated translation machinery responsible for the synthesis of mitochondrial genome-encoded proteins, including at least some of the essential transmembrane subunits of the mitochondrial respiratory chain. The mitoribosomes are attached to the mitochondrial inner membrane and translation products are cotranslationally integrated into the membrane. The sequence is that of Large ribosomal subunit protein mL53 (MRPL44) from Saccharomyces cerevisiae (strain ATCC 204508 / S288c) (Baker's yeast).